The sequence spans 248 residues: MTTLFISDLHLDPSRPEITDLFLRFLREQAPTADALYILGDLFEAWIGDDTPSPAADAVADALKVLTDSGVPAYFIRGNRDFLLGEDYARRAGLRILPDPCVIELYGRPVLLQHGDLLCTDDIPYQQFRAQTRDPAFQAQFLSQPLAARIAFAQKARETSQARQSEMKQGDRATFENVTDVAPAEVDATFVRHGVDTMIHGHTHRPAIHALQAGGRACTRIVLGDWYEQGSVLRVDANGWTLDTLSRE.

Positions 8, 10, 41, 79, and 114 each coordinate Mn(2+). 79-80 (NR) contacts substrate. 4 residues coordinate substrate: D122, S160, D171, and H202. Residues H202 and H204 each coordinate Mn(2+).

It belongs to the LpxH family. Mn(2+) serves as cofactor.

The protein localises to the cell inner membrane. It carries out the reaction UDP-2-N,3-O-bis[(3R)-3-hydroxytetradecanoyl]-alpha-D-glucosamine + H2O = 2-N,3-O-bis[(3R)-3-hydroxytetradecanoyl]-alpha-D-glucosaminyl 1-phosphate + UMP + 2 H(+). The protein operates within glycolipid biosynthesis; lipid IV(A) biosynthesis; lipid IV(A) from (3R)-3-hydroxytetradecanoyl-[acyl-carrier-protein] and UDP-N-acetyl-alpha-D-glucosamine: step 4/6. Its function is as follows. Hydrolyzes the pyrophosphate bond of UDP-2,3-diacylglucosamine to yield 2,3-diacylglucosamine 1-phosphate (lipid X) and UMP by catalyzing the attack of water at the alpha-P atom. Involved in the biosynthesis of lipid A, a phosphorylated glycolipid that anchors the lipopolysaccharide to the outer membrane of the cell. In Stenotrophomonas maltophilia (strain R551-3), this protein is UDP-2,3-diacylglucosamine hydrolase.